The chain runs to 347 residues: MTDFFQSLGMSYEWAWGLATVAGILLIALPLMLAVAMIIYADRKIWAAIALRRGPNVVGPFGLLQSFADGLKVFLQETIIPSGANRGLFLIAPIITFTVALLAWAVIPFNSGAVLADINVGLLYILAISSLGVYGVILSGWASNSKYPFFSALRASAQMISYEVSIGFILIGVVLFADSFNMNEIVKAQQGHGLGIVNAFGFNLLLFPLAVMFLISSLAETARAPFDLTEAESELVAGYQTEYSSMSFALFWLGEYANVLLMCTLNAVLFWGGWLPPIDWAPLYAVPGIIWLFAKILFFFFVFSWVKATVPRYRYDQLMRLGWKIFLPISLIWIFLISGYLMLTRYS.

8 consecutive transmembrane segments (helical) span residues 21-41 (VAGILLIALPLMLAVAMIIYA), 87-107 (GLFLIAPIITFTVALLAWAVI), 118-138 (INVGLLYILAISSLGVYGVIL), 157-177 (AQMISYEVSIGFILIGVVLFA), 195-215 (GIVNAFGFNLLLFPLAVMFLI), 258-278 (NVLLMCTLNAVLFWGGWLPPI), 283-303 (LYAVPGIIWLFAKILFFFFVF), and 323-343 (WKIFLPISLIWIFLISGYLML).

Belongs to the complex I subunit 1 family. In terms of assembly, NDH-1 is composed of 14 different subunits. Subunits NuoA, H, J, K, L, M, N constitute the membrane sector of the complex.

The protein resides in the cell inner membrane. The enzyme catalyses a quinone + NADH + 5 H(+)(in) = a quinol + NAD(+) + 4 H(+)(out). Its function is as follows. NDH-1 shuttles electrons from NADH, via FMN and iron-sulfur (Fe-S) centers, to quinones in the respiratory chain. The immediate electron acceptor for the enzyme in this species is believed to be ubiquinone. Couples the redox reaction to proton translocation (for every two electrons transferred, four hydrogen ions are translocated across the cytoplasmic membrane), and thus conserves the redox energy in a proton gradient. This subunit may bind ubiquinone. The chain is NADH-quinone oxidoreductase subunit H from Sphingopyxis alaskensis (strain DSM 13593 / LMG 18877 / RB2256) (Sphingomonas alaskensis).